We begin with the raw amino-acid sequence, 511 residues long: Probable dolichyl pyrophosphate Glc1Man9GlcNAc2 alpha-1,3-glucosyltransferase (511 aa).

11 helical membrane passes run leucine 4 to histidine 24, valine 94 to valine 112, aspartate 124 to valine 144, tyrosine 151 to phenylalanine 171, valine 210 to valine 230, proline 300 to valine 320, leucine 332 to valine 352, alanine 356 to valine 370, tyrosine 377 to phenylalanine 394, tryptophan 432 to leucine 452, and tyrosine 469 to glycine 491.

This sequence belongs to the ALG6/ALG8 glucosyltransferase family.

It localises to the endoplasmic reticulum membrane. It catalyses the reaction an alpha-D-Glc-(1-&gt;3)-alpha-D-Man-(1-&gt;2)-alpha-D-Man-(1-&gt;2)-alpha-D-Man-(1-&gt;3)-[alpha-D-Man-(1-&gt;2)-alpha-D-Man-(1-&gt;3)-[alpha-D-Man-(1-&gt;2)-alpha-D-Man-(1-&gt;6)]-alpha-D-Man-(1-&gt;6)]-beta-D-Man-(1-&gt;4)-beta-D-GlcNAc-(1-&gt;4)-alpha-D-GlcNAc-diphospho-di-trans,poly-cis-dolichol + a di-trans,poly-cis-dolichyl beta-D-glucosyl phosphate = an alpha-D-Glc-(1-&gt;3)-alpha-D-Glc-(1-&gt;3)-alpha-D-Man-(1-&gt;2)-alpha-D-Man-(1-&gt;2)-alpha-D-Man-(1-&gt;3)-[alpha-D-Man-(1-&gt;2)-alpha-D-Man-(1-&gt;3)-[alpha-D-Man-(1-&gt;2)-alpha-D-Man-(1-&gt;6)]-alpha-D-Man-(1-&gt;6)]-beta-D-Man-(1-&gt;4)-beta-D-GlcNAc-(1-&gt;4)-alpha-D-GlcNAc-diphospho-di-trans,poly-cis-dolichol + a di-trans,poly-cis-dolichyl phosphate + H(+). The protein operates within protein modification; protein glycosylation. Its function is as follows. Adds the second glucose residue to the lipid-linked oligosaccharide precursor for N-linked glycosylation. Transfers glucose from dolichyl phosphate glucose (Dol-P-Glc) onto the lipid-linked oligosaccharide Glc(1)Man(9)GlcNAc(2)-PP-Dol. Functions in developmental processes such as germband extension, the apical constriction of mesoderm precursor cells and ventral furrow formation in early embryogenesis prior to gastrulation. Involved in the glycosylation and intracellular distribution of shg (E-cadherin). Function in cell intercalation in the lateral epidermis during germband extension may be due to its effect on shg. The protein is Probable dolichyl pyrophosphate Glc1Man9GlcNAc2 alpha-1,3-glucosyltransferase of Drosophila melanogaster (Fruit fly).